A 213-amino-acid chain; its full sequence is Protein-L-isoaspartate O-methyltransferase (213 aa).

The active site involves S60.

This sequence belongs to the methyltransferase superfamily. L-isoaspartyl/D-aspartyl protein methyltransferase family.

Its subcellular location is the cytoplasm. It catalyses the reaction [protein]-L-isoaspartate + S-adenosyl-L-methionine = [protein]-L-isoaspartate alpha-methyl ester + S-adenosyl-L-homocysteine. In terms of biological role, catalyzes the methyl esterification of L-isoaspartyl residues in peptides and proteins that result from spontaneous decomposition of normal L-aspartyl and L-asparaginyl residues. It plays a role in the repair and/or degradation of damaged proteins. The protein is Protein-L-isoaspartate O-methyltransferase of Roseobacter denitrificans (strain ATCC 33942 / OCh 114) (Erythrobacter sp. (strain OCh 114)).